The sequence spans 1083 residues: Regulator of the glycerol channel 1 (1083 aa).

Disordered stretches follow at residues 1 to 46 (MSDY…GSSD) and 69 to 89 (LKNEPASGNTQMNGPDGKENK). Residues 13–31 (GGISKQPATPGSTRSSSRN) show a composition bias toward polar residues. Phosphoserine occurs at positions 136, 249, 252, 481, and 537. In terms of domain architecture, PH spans 495 to 606 (CIRVGYLLKK…DCSLKDSTDS (112 aa)). A disordered region spans residues 534–582 (DSKSPRSKNKPVVEQSDISRVNKDGTNAGSHPSSKGTQDPKLTKRRKGL). Positions 549–570 (SDISRVNKDGTNAGSHPSSKGT) are enriched in polar residues. A phosphoserine mark is found at S652, S765, and S813. A phosphothreonine mark is found at T817 and T857. S866, S879, S918, S966, S969, and S975 each carry phosphoserine. Positions 979–1083 (EENRTQNCSG…TVPATSASSK (105 aa)) are disordered. Composition is skewed to polar residues over residues 983 to 992 (TQNCSGSRKS), 1043 to 1061 (LKKTYSAENVPLTSTVSND), and 1071 to 1083 (STNTVPATSASSK). A phosphoserine mark is found at S1059, S1081, and S1082.

This sequence belongs to the RGC1 family.

It is found in the cytoplasm. Its function is as follows. Positive regulator of FPS1 glycerol channel required for the glycerol efflux. This chain is Regulator of the glycerol channel 1 (RGC1), found in Saccharomyces cerevisiae (strain ATCC 204508 / S288c) (Baker's yeast).